The following is a 155-amino-acid chain: Ribonuclease H (155 aa).

Residues 4-146 form the RNase H type-1 domain; that stretch reads NIDVVEIYTD…CDRLATEQIK (143 aa). Positions 13, 51, 73, and 138 each coordinate Mg(2+).

The protein belongs to the RNase H family. Monomer. Mg(2+) is required as a cofactor.

It is found in the cytoplasm. It catalyses the reaction Endonucleolytic cleavage to 5'-phosphomonoester.. Endonuclease that specifically degrades the RNA of RNA-DNA hybrids. The chain is Ribonuclease H from Thermoanaerobacter pseudethanolicus (strain ATCC 33223 / 39E) (Clostridium thermohydrosulfuricum).